A 298-amino-acid polypeptide reads, in one-letter code: Super small secreted glycoprotein (298 aa).

An N-terminal signal peptide occupies residues methionine 1–serine 32. N-linked (GlcNAc...) asparagine; by host glycosylation is present at asparagine 40. Disulfide bonds link cysteine 108–cysteine 135 and cysteine 121–cysteine 147. N-linked (GlcNAc...) asparagine; by host glycosylation is found at asparagine 204, asparagine 228, asparagine 238, asparagine 257, and asparagine 268.

This sequence belongs to the filoviruses glycoprotein family.

The protein localises to the secreted. This chain is Super small secreted glycoprotein (GP), found in Epomops franqueti (Franquet's epauletted fruit bat).